Consider the following 198-residue polypeptide: V-type ATP synthase subunit E (198 aa).

It belongs to the V-ATPase E subunit family.

Functionally, produces ATP from ADP in the presence of a proton gradient across the membrane. This is V-type ATP synthase subunit E from Clostridium perfringens (strain ATCC 13124 / DSM 756 / JCM 1290 / NCIMB 6125 / NCTC 8237 / Type A).